The sequence spans 227 residues: UPF0758 protein lpl2409 (227 aa).

Residues 102-225 (RLSNTQQTYA…YSIFAENKWA (124 aa)) form the MPN domain. Residues His-173, His-175, and Asp-186 each coordinate Zn(2+). The JAMM motif signature appears at 173–186 (HNHPSGLSDASQQD).

This sequence belongs to the UPF0758 family.

The polypeptide is UPF0758 protein lpl2409 (Legionella pneumophila (strain Lens)).